The sequence spans 324 residues: Cysteine-rich repeat secretory protein 9 (324 aa).

The signal sequence occupies residues 1–27 (MARIIITLTIPLFYFFFFSLLSHQTMS). 2 Gnk2-homologous domains span residues 29–132 (PDHI…NVSF) and 138–248 (IVPS…TSVL). Residues 251–286 (PPPSPSAPPPRSPPPKSSPPSSLPQTPSPPLVFTPP) are disordered.

It belongs to the cysteine-rich repeat secretory protein family.

It localises to the secreted. The sequence is that of Cysteine-rich repeat secretory protein 9 (CRRSP9) from Arabidopsis thaliana (Mouse-ear cress).